The primary structure comprises 101 residues: DNA-binding protein Fis (101 aa).

Residues 77 to 96 (QTRAANMLGINRGTLRKKLK) constitute a DNA-binding region (H-T-H motif).

This sequence belongs to the transcriptional regulatory Fis family. In terms of assembly, homodimer.

In terms of biological role, activates ribosomal RNA transcription. Plays a direct role in upstream activation of rRNA promoters. The chain is DNA-binding protein Fis from Shewanella baltica (strain OS223).